Here is a 61-residue protein sequence, read N- to C-terminus: Small ribosomal subunit protein uS14 (61 aa).

4 residues coordinate Zn(2+): Cys-24, Cys-27, Cys-40, and Cys-43.

This sequence belongs to the universal ribosomal protein uS14 family. Zinc-binding uS14 subfamily. In terms of assembly, part of the 30S ribosomal subunit. Contacts proteins S3 and S10. It depends on Zn(2+) as a cofactor.

Binds 16S rRNA, required for the assembly of 30S particles and may also be responsible for determining the conformation of the 16S rRNA at the A site. The protein is Small ribosomal subunit protein uS14 of Acetivibrio thermocellus (strain ATCC 27405 / DSM 1237 / JCM 9322 / NBRC 103400 / NCIMB 10682 / NRRL B-4536 / VPI 7372) (Clostridium thermocellum).